A 419-amino-acid polypeptide reads, in one-letter code: Murein hydrolase activator EnvC (419 aa).

The signal sequence occupies residues 1 to 34 (MTRAVKPRRFAIRPIIYASVLSAGVLLCAFSAHA). 2 coiled-coil regions span residues 35-124 (DERD…LDAA) and 155-271 (LNQA…ATRK). Positions 252–270 (EREAREAQAVRDRQKEATR) are enriched in basic and acidic residues. Residues 252-290 (EREAREAQAVRDRQKEATRKGTTYKPTESEKSLMSRTGG) form a disordered region.

This sequence belongs to the peptidase M23B family.

The protein resides in the periplasm. Activator of the cell wall hydrolases AmiA and AmiB. Required for septal murein cleavage and daughter cell separation during cell division. In vitro, exhibits weak endoproteolytic activity on beta-casein. This is Murein hydrolase activator EnvC (envC) from Escherichia coli (strain K12).